The following is a 378-amino-acid chain: POU domain, class 3, transcription factor 2 (378 aa).

Disordered regions lie at residues 1–28, 86–118, and 151–205; these read MATT…SMQQ, SPRD…HDSR, and LIPG…TPTS. A compositionally biased stretch (basic and acidic residues) spans 164 to 181; the sequence is MRDAHEDHHSPHLSDHGH. The POU-specific domain maps to 200–274; the sequence is EDTPTSDDLE…LLNKWLEEAD (75 aa). Ser-279 is subject to Phosphoserine. Residues 292-351 constitute a DNA-binding region (homeobox); that stretch reads KRKKRTSIEVSVKGALESHFLKCPKPAASEITSLADSLQLEKEVVRVWFCNRRQKEKRMT. Residues 347-378 form a disordered region; it reads EKRMTPPGGPLPGTEDVYGDTPPHHGVQTPVQ.

It belongs to the POU transcription factor family. Class-3 subfamily. In terms of tissue distribution, predominantly expressed in the central nervous system, with strong expression in the cerebellum.

It localises to the nucleus. In terms of biological role, transcription factor that may play important roles in patterning the embryonic brain. The sequence is that of POU domain, class 3, transcription factor 2 (pou3f2) from Danio rerio (Zebrafish).